The primary structure comprises 186 residues: Elongation factor P (186 aa).

This sequence belongs to the elongation factor P family.

Its subcellular location is the cytoplasm. Its pathway is protein biosynthesis; polypeptide chain elongation. Functionally, involved in peptide bond synthesis. Stimulates efficient translation and peptide-bond synthesis on native or reconstituted 70S ribosomes in vitro. Probably functions indirectly by altering the affinity of the ribosome for aminoacyl-tRNA, thus increasing their reactivity as acceptors for peptidyl transferase. The protein is Elongation factor P of Streptococcus agalactiae serotype Ia (strain ATCC 27591 / A909 / CDC SS700).